The chain runs to 225 residues: MLTTTFALLTAALGVSAHYTLPRVGTGSDWQHVRRADNWQNNGFVGDVNSEQIRCFQATPAGAQDVYTVQAGSTVTYHANPSIYHPGPMQFYLARVPDGQDVKSWTGEGAVWFKVYEEQPQFGAQLTWPSNGKSSFEVPIPSCIRAGNYLLRAEHIALHVAQSQGGAQFYISCAQLQVTGGGSTEPSQKVSFPGAYKSTDPGILININYPVPTSYQNPGPAVFRC.

A signal peptide spans 1 to 17 (MLTTTFALLTAALGVSA). 2 residues coordinate Cu(2+): His-18 and His-85. 2 disulfide bridges follow: Cys-55–Cys-173 and Cys-143–Cys-225. His-159 and Gln-168 together coordinate O2. Position 170 (Tyr-170) interacts with Cu(2+).

Belongs to the polysaccharide monooxygenase AA9 family. Cu(2+) is required as a cofactor.

The protein resides in the secreted. It catalyses the reaction [(1-&gt;4)-beta-D-glucosyl]n+m + reduced acceptor + O2 = 4-dehydro-beta-D-glucosyl-[(1-&gt;4)-beta-D-glucosyl]n-1 + [(1-&gt;4)-beta-D-glucosyl]m + acceptor + H2O.. Its activity is regulated as follows. Is able to utilize various natural phenolic compounds as reducing agents. Most of these reducing agents are present in plants, either free or as lignin building blocks, such as sinapic acid, or as flavonoids such as catechin and dopamine. Phenolic compounds with 1,2-benzenediol and 1,2,3-benzenetriol moieties yield the highest release of oxidized and non-oxidized glucooligosaccharides from cellulose compared to monophenols or sulfur-containing compounds. Lytic polysaccharide monooxygenase (LPMO) that depolymerizes crystalline and amorphous polysaccharides via the oxidation of scissile alpha- or beta-(1-4)-glycosidic bonds, yielding C1 or C4 oxidation products. Catalysis by LPMOs requires the reduction of the active-site copper from Cu(II) to Cu(I) by a reducing agent and H(2)O(2) or O(2) as a cosubstrate. Shows oxidative cleavage of xylan in addition to cellulose. Shows a strong synergistic effect with endoglucanase I (EGI) with a 16-fold higher release of detected oligosaccharides. This is AA9 family lytic polysaccharide monooxygenase A from Thermothelomyces thermophilus (strain ATCC 42464 / BCRC 31852 / DSM 1799) (Sporotrichum thermophile).